Here is a 422-residue protein sequence, read N- to C-terminus: Isocitrate dehydrogenase [NADP] (422 aa).

Threonine 94 is a binding site for NADP(+). Serine 103, asparagine 105, arginine 109, arginine 119, and arginine 143 together coordinate D-threo-isocitrate. Aspartate 310 contributes to the Mg(2+) binding site. Residues 344 to 350 (HGTAPKY), asparagine 357, tyrosine 396, and arginine 400 each bind NADP(+).

The protein belongs to the isocitrate and isopropylmalate dehydrogenases family. As to quaternary structure, homodimer. Requires Mg(2+) as cofactor. Mn(2+) is required as a cofactor.

It carries out the reaction D-threo-isocitrate + NADP(+) = 2-oxoglutarate + CO2 + NADPH. In terms of biological role, catalyzes the oxidative decarboxylation of isocitrate to 2-oxoglutarate and carbon dioxide with the concomitant reduction of NADP(+). In Staphylococcus epidermidis (strain ATCC 35984 / DSM 28319 / BCRC 17069 / CCUG 31568 / BM 3577 / RP62A), this protein is Isocitrate dehydrogenase [NADP] (icd).